The sequence spans 405 residues: Diaminopimelate decarboxylase (405 aa).

Lysine 46 carries the N6-(pyridoxal phosphate)lysine modification. Pyridoxal 5'-phosphate-binding positions include glycine 225 and 259–262; that span reads EPGR. 3 residues coordinate substrate: arginine 262, arginine 298, and tyrosine 302. Residue cysteine 329 is the Proton donor of the active site. Positions 330 and 358 each coordinate substrate. Residue tyrosine 358 participates in pyridoxal 5'-phosphate binding.

It belongs to the Orn/Lys/Arg decarboxylase class-II family. LysA subfamily. As to quaternary structure, homodimer. Pyridoxal 5'-phosphate serves as cofactor.

It carries out the reaction meso-2,6-diaminopimelate + H(+) = L-lysine + CO2. It participates in amino-acid biosynthesis; L-lysine biosynthesis via DAP pathway; L-lysine from DL-2,6-diaminopimelate: step 1/1. Its function is as follows. Specifically catalyzes the decarboxylation of meso-diaminopimelate (meso-DAP) to L-lysine. This Helicobacter pylori (strain J99 / ATCC 700824) (Campylobacter pylori J99) protein is Diaminopimelate decarboxylase.